We begin with the raw amino-acid sequence, 224 residues long: Transcription factor MYB1 (224 aa).

2 HTH myb-type domains span residues 10 to 66 (LGRV…KPSI) and 67 to 117 (KRGH…YKKH). DNA-binding regions (H-T-H motif) lie at residues 38–62 (WKRVPERAGLNRCRKSCRWRWLNYL) and 90–113 (WSLIAAKLPGRTINDVKNYCNTHL).

It localises to the nucleus. In terms of biological role, activates DODA1 and CYP76AD1 in the betalain red pigment pathway. The polypeptide is Transcription factor MYB1 (Beta vulgaris (Sugar beet)).